The following is a 120-amino-acid chain: Large ribosomal subunit protein bL19c (120 aa).

The protein belongs to the bacterial ribosomal protein bL19 family.

It is found in the plastid. The protein resides in the chloroplast. The polypeptide is Large ribosomal subunit protein bL19c (rpl19) (Trieres chinensis (Marine centric diatom)).